A 346-amino-acid polypeptide reads, in one-letter code: Cytochrome c551 peroxidase (346 aa).

An N-terminal signal peptide occupies residues 1–23 (MQSSQLLPLGSLLLSFATPLAQA). Positions 74, 77, 78, 220, 223, 224, 284, and 298 each coordinate heme c.

Heme c serves as cofactor. Binds 2 heme groups per subunit. Sequencing of the whole protein indicates about 20% starts on Val-247.

Its subcellular location is the periplasm. The catalysed reaction is 2 Fe(II)-[cytochrome c] + H2O2 + 2 H(+) = 2 Fe(III)-[cytochrome c] + 2 H2O. Functionally, catalyzes the peroxidative oxidation of azurin and cytochrome c551. Likely to provide protection against toxic peroxides. This is Cytochrome c551 peroxidase (ccpA) from Pseudomonas aeruginosa (strain ATCC 15692 / DSM 22644 / CIP 104116 / JCM 14847 / LMG 12228 / 1C / PRS 101 / PAO1).